We begin with the raw amino-acid sequence, 480 residues long: Methylenetetrahydrofolate--tRNA-(uracil-5-)-methyltransferase TrmFO (480 aa).

Glycine 15–glycine 20 is an FAD binding site.

This sequence belongs to the MnmG family. TrmFO subfamily. FAD serves as cofactor.

It localises to the cytoplasm. It carries out the reaction uridine(54) in tRNA + (6R)-5,10-methylene-5,6,7,8-tetrahydrofolate + NADH + H(+) = 5-methyluridine(54) in tRNA + (6S)-5,6,7,8-tetrahydrofolate + NAD(+). The catalysed reaction is uridine(54) in tRNA + (6R)-5,10-methylene-5,6,7,8-tetrahydrofolate + NADPH + H(+) = 5-methyluridine(54) in tRNA + (6S)-5,6,7,8-tetrahydrofolate + NADP(+). In terms of biological role, catalyzes the folate-dependent formation of 5-methyl-uridine at position 54 (M-5-U54) in all tRNAs. In Sinorhizobium medicae (strain WSM419) (Ensifer medicae), this protein is Methylenetetrahydrofolate--tRNA-(uracil-5-)-methyltransferase TrmFO.